Here is a 290-residue protein sequence, read N- to C-terminus: Pyridoxal kinase PdxY (290 aa).

Ser-14 contributes to the substrate binding site. Asp-116 and Glu-153 together coordinate ATP. Substrate is bound at residue Asp-226.

Belongs to the pyridoxine kinase family. PdxY subfamily. As to quaternary structure, homodimer. Requires Mg(2+) as cofactor.

The enzyme catalyses pyridoxal + ATP = pyridoxal 5'-phosphate + ADP + H(+). The protein operates within cofactor metabolism; pyridoxal 5'-phosphate salvage; pyridoxal 5'-phosphate from pyridoxal: step 1/1. Functionally, pyridoxal kinase involved in the salvage pathway of pyridoxal 5'-phosphate (PLP). Catalyzes the phosphorylation of pyridoxal to PLP. This chain is Pyridoxal kinase PdxY, found in Rubrobacter xylanophilus (strain DSM 9941 / JCM 11954 / NBRC 16129 / PRD-1).